The following is a 232-amino-acid chain: Clarin-2 (232 aa).

The next 4 helical transmembrane spans lie at 8–28 (VWYG…IVAL), 101–121 (ILLL…FAIL), 139–159 (LWNV…MAAV), and 188–208 (SFWI…VVAI).

This sequence belongs to the clarin family. As to expression, detected in inner ear, particularly in hair bundles of auditory hair cells and is enriched in apical stereocilia. Detected in eye, but not in brain or muscle.

It localises to the cell projection. The protein resides in the stereocilium membrane. Its function is as follows. Plays a key role to hearing function. Required for normal organization and maintenance of the stereocilia bundle and for mechano-electrical transduction. The protein is Clarin-2 of Mus musculus (Mouse).